Consider the following 388-residue polypeptide: Alpha-2B adrenergic receptor (388 aa).

A helical membrane pass occupies residues 1–25; the sequence is AIAAVITFLILFTIFGNALVILAVL. Topologically, residues 26–36 are cytoplasmic; that stretch reads TSRSLRAPQNL. Residues 37-62 form a helical membrane-spanning segment; sequence FLVSLAAADILVATLIIPFSLANELL. Over 63 to 72 the chain is Extracellular; the sequence is GYWYFRRTWC. A disulfide bridge links cysteine 72 with cysteine 151. Residues 73–95 traverse the membrane as a helical segment; it reads EVYLALDVLFCTSSIVHLCAISL. At 96–117 the chain is on the cytoplasmic side; it reads DRYWAVSRALEYNSKRTPRXIK. A helical transmembrane segment spans residues 118–140; sequence CIILTVWLIAAAISLPPLIYKGD. The Extracellular portion of the chain corresponds to 141-156; sequence QGPQPRGRPQCKLNQE. Residues 157–180 traverse the membrane as a helical segment; that stretch reads AWYILSSSIGSFFAPCLIMILVYL. The Cytoplasmic segment spans residues 181 to 352; it reads RIYVIAKRSN…LTREKRFTFV (172 aa). The interval 193–309 is disordered; that stretch reads GPRAKGASRE…ASACNPPLQQ (117 aa). Residues 239–249 are compositionally biased toward basic and acidic residues; it reads PTGEKEGKTPE. The segment covering 279–291 has biased composition (acidic residues); sequence PEEEAEEEEEECE. The span at 292 to 302 shows a compositional bias: low complexity; the sequence is PQAAPASSASA. A helical membrane pass occupies residues 353–376; that stretch reads LAVVIGVFVLCWFPFFFSYSLGAI. Residues 377–385 lie on the Extracellular side of the membrane; it reads CPQRCKVPH. Residues 386 to 388 traverse the membrane as a helical segment; that stretch reads GLF.

Belongs to the G-protein coupled receptor 1 family. Adrenergic receptor subfamily. ADRA2B sub-subfamily. Interacts with RAB26. Interacts with PPP1R9B.

The protein resides in the cell membrane. Functionally, alpha-2 adrenergic receptors mediate the catecholamine-induced inhibition of adenylate cyclase through the action of G proteins. The sequence is that of Alpha-2B adrenergic receptor (ADRA2B) from Orycteropus afer (Aardvark).